The sequence spans 110 residues: UPF0060 membrane protein PFL_4337 (110 aa).

The next 4 helical transmembrane spans lie at 5–25 (LWFF…WMWL), 31–51 (ALWV…LTKV), 59–79 (AYAA…AVVE), and 84–104 (LGSD…ILFG).

This sequence belongs to the UPF0060 family.

The protein resides in the cell inner membrane. The sequence is that of UPF0060 membrane protein PFL_4337 from Pseudomonas fluorescens (strain ATCC BAA-477 / NRRL B-23932 / Pf-5).